A 235-amino-acid polypeptide reads, in one-letter code: Orotidine 5'-phosphate decarboxylase (235 aa).

Substrate contacts are provided by residues Asp12, Lys34, 61 to 70 (DMKLLDIDNT), Thr116, Arg177, Gln186, Gly206, and Arg207. Lys63 functions as the Proton donor in the catalytic mechanism.

The protein belongs to the OMP decarboxylase family. Type 1 subfamily. As to quaternary structure, homodimer.

It catalyses the reaction orotidine 5'-phosphate + H(+) = UMP + CO2. The protein operates within pyrimidine metabolism; UMP biosynthesis via de novo pathway; UMP from orotate: step 2/2. In terms of biological role, catalyzes the decarboxylation of orotidine 5'-monophosphate (OMP) to uridine 5'-monophosphate (UMP). The polypeptide is Orotidine 5'-phosphate decarboxylase (Rhizobium etli (strain ATCC 51251 / DSM 11541 / JCM 21823 / NBRC 15573 / CFN 42)).